The primary structure comprises 256 residues: Thiazole synthase (256 aa).

Residue Lys95 is the Schiff-base intermediate with DXP of the active site. Residues Gly156, 182–183, and 204–205 each bind 1-deoxy-D-xylulose 5-phosphate; these read AG and NT.

The protein belongs to the ThiG family. As to quaternary structure, homotetramer. Forms heterodimers with either ThiH or ThiS.

Its subcellular location is the cytoplasm. It catalyses the reaction [ThiS sulfur-carrier protein]-C-terminal-Gly-aminoethanethioate + 2-iminoacetate + 1-deoxy-D-xylulose 5-phosphate = [ThiS sulfur-carrier protein]-C-terminal Gly-Gly + 2-[(2R,5Z)-2-carboxy-4-methylthiazol-5(2H)-ylidene]ethyl phosphate + 2 H2O + H(+). The protein operates within cofactor biosynthesis; thiamine diphosphate biosynthesis. Functionally, catalyzes the rearrangement of 1-deoxy-D-xylulose 5-phosphate (DXP) to produce the thiazole phosphate moiety of thiamine. Sulfur is provided by the thiocarboxylate moiety of the carrier protein ThiS. In vitro, sulfur can be provided by H(2)S. The polypeptide is Thiazole synthase (Klebsiella pneumoniae subsp. pneumoniae (strain ATCC 700721 / MGH 78578)).